The following is a 157-amino-acid chain: Small ribosomal subunit protein uS9 (157 aa).

Belongs to the universal ribosomal protein uS9 family.

The protein is Small ribosomal subunit protein uS9 of Caulobacter sp. (strain K31).